Consider the following 259-residue polypeptide: Ribonuclease PH (259 aa).

Phosphate-binding positions include Arg-88 and 126–128; that span reads GTR.

Belongs to the RNase PH family. Homohexameric ring arranged as a trimer of dimers.

The catalysed reaction is tRNA(n+1) + phosphate = tRNA(n) + a ribonucleoside 5'-diphosphate. Phosphorolytic 3'-5' exoribonuclease that plays an important role in tRNA 3'-end maturation. Removes nucleotide residues following the 3'-CCA terminus of tRNAs; can also add nucleotides to the ends of RNA molecules by using nucleoside diphosphates as substrates, but this may not be physiologically important. Probably plays a role in initiation of 16S rRNA degradation (leading to ribosome degradation) during starvation. In Mycobacterium avium (strain 104), this protein is Ribonuclease PH.